The following is a 356-amino-acid chain: Magnesium-protoporphyrin IX monomethyl ester [oxidative] cyclase (356 aa).

Belongs to the AcsF family. The cofactor is Fe cation.

The catalysed reaction is Mg-protoporphyrin IX 13-monomethyl ester + 3 NADPH + 3 O2 + 2 H(+) = 3,8-divinyl protochlorophyllide a + 3 NADP(+) + 5 H2O. It participates in porphyrin-containing compound metabolism; chlorophyll biosynthesis (light-independent). Catalyzes the formation of the isocyclic ring in chlorophyll biosynthesis. Mediates the cyclase reaction, which results in the formation of divinylprotochlorophyllide (Pchlide) characteristic of all chlorophylls from magnesium-protoporphyrin IX 13-monomethyl ester (MgPMME). This Synechococcus sp. (strain CC9605) protein is Magnesium-protoporphyrin IX monomethyl ester [oxidative] cyclase.